We begin with the raw amino-acid sequence, 315 residues long: Lipoyl synthase (315 aa).

Residues C62, C67, C73, C88, C92, C95, and S302 each contribute to the [4Fe-4S] cluster site. One can recognise a Radical SAM core domain in the interval 74-292; that stretch reads FNHGTATFMI…KIALKLGFIR (219 aa).

The protein belongs to the radical SAM superfamily. Lipoyl synthase family. The cofactor is [4Fe-4S] cluster.

It localises to the cytoplasm. It catalyses the reaction [[Fe-S] cluster scaffold protein carrying a second [4Fe-4S](2+) cluster] + N(6)-octanoyl-L-lysyl-[protein] + 2 oxidized [2Fe-2S]-[ferredoxin] + 2 S-adenosyl-L-methionine + 4 H(+) = [[Fe-S] cluster scaffold protein] + N(6)-[(R)-dihydrolipoyl]-L-lysyl-[protein] + 4 Fe(3+) + 2 hydrogen sulfide + 2 5'-deoxyadenosine + 2 L-methionine + 2 reduced [2Fe-2S]-[ferredoxin]. It functions in the pathway protein modification; protein lipoylation via endogenous pathway; protein N(6)-(lipoyl)lysine from octanoyl-[acyl-carrier-protein]: step 2/2. Functionally, catalyzes the radical-mediated insertion of two sulfur atoms into the C-6 and C-8 positions of the octanoyl moiety bound to the lipoyl domains of lipoate-dependent enzymes, thereby converting the octanoylated domains into lipoylated derivatives. This Vesicomyosocius okutanii subsp. Calyptogena okutanii (strain HA) protein is Lipoyl synthase.